A 444-amino-acid polypeptide reads, in one-letter code: UDP-N-acetylmuramate--L-alanine ligase (444 aa).

Residue 111–117 (GAHGKTS) coordinates ATP.

This sequence belongs to the MurCDEF family.

Its subcellular location is the cytoplasm. It carries out the reaction UDP-N-acetyl-alpha-D-muramate + L-alanine + ATP = UDP-N-acetyl-alpha-D-muramoyl-L-alanine + ADP + phosphate + H(+). It participates in cell wall biogenesis; peptidoglycan biosynthesis. Cell wall formation. The chain is UDP-N-acetylmuramate--L-alanine ligase from Leuconostoc citreum (strain KM20).